The chain runs to 197 residues: Probable molybdenum cofactor guanylyltransferase (197 aa).

Residues 9-11 (LAG), Lys-21, Asp-65, and Asp-94 contribute to the GTP site. Mg(2+) is bound at residue Asp-94.

The protein belongs to the MobA family. Requires Mg(2+) as cofactor.

Its subcellular location is the cytoplasm. It catalyses the reaction Mo-molybdopterin + GTP + H(+) = Mo-molybdopterin guanine dinucleotide + diphosphate. Its function is as follows. Transfers a GMP moiety from GTP to Mo-molybdopterin (Mo-MPT) cofactor (Moco or molybdenum cofactor) to form Mo-molybdopterin guanine dinucleotide (Mo-MGD) cofactor. The polypeptide is Probable molybdenum cofactor guanylyltransferase (Carboxydothermus hydrogenoformans (strain ATCC BAA-161 / DSM 6008 / Z-2901)).